A 423-amino-acid chain; its full sequence is Histidine--tRNA ligase (423 aa).

This sequence belongs to the class-II aminoacyl-tRNA synthetase family. In terms of assembly, homodimer.

The protein localises to the cytoplasm. It carries out the reaction tRNA(His) + L-histidine + ATP = L-histidyl-tRNA(His) + AMP + diphosphate + H(+). This is Histidine--tRNA ligase (hisS) from Pasteurella multocida (strain Pm70).